Reading from the N-terminus, the 1553-residue chain is Probable serine/threonine-protein kinase qkgA (1553 aa).

A disordered region spans residues 113-142; sequence SSSSSSSSTSSSPSLTSSPSSPISTSPPYH. LRR repeat units lie at residues 287-309, 311-333, 334-356, and 357-378; these read NGTF…INMC, QLVE…TELK, FLKN…CNLT, and LLKV…IVEL. Residues 395 to 619 enclose the Roc domain; sequence SCETWNKVKL…KRLIHESEKS (225 aa). Disordered stretches follow at residues 643 to 696, 955 to 1019, and 1048 to 1090; these read NQGR…QQQQ, ISNS…PSSQ, and NQNG…NNNK. Low complexity-rich tracts occupy residues 648–675, 683–696, 956–1018, and 1059–1090; these read SISN…TSKK, SQQQ…QQQQ, SNST…SPSS, and TTTT…NNNK. Residues 694 to 893 enclose the COR domain; it reads QQQLQQSIKE…KTYWKDGVLL (200 aa). Residues 1242–1546 enclose the Protein kinase domain; that stretch reads ILYERQIGEG…QTSYFDSPFL (305 aa). Residues 1248–1256 and K1271 each bind ATP; that span reads IGEGGFGLI. The Proton acceptor role is filled by D1393.

It belongs to the protein kinase superfamily. TKL Ser/Thr protein kinase family. ROCO subfamily.

It carries out the reaction L-seryl-[protein] + ATP = O-phospho-L-seryl-[protein] + ADP + H(+). It catalyses the reaction L-threonyl-[protein] + ATP = O-phospho-L-threonyl-[protein] + ADP + H(+). Involved in growth, and during development, in aggregation. The protein is Probable serine/threonine-protein kinase qkgA (qkgA-1) of Dictyostelium discoideum (Social amoeba).